A 329-amino-acid polypeptide reads, in one-letter code: Glycerol-3-phosphate dehydrogenase [NAD(P)+] (329 aa).

Positions 15, 35, and 107 each coordinate NADPH. Residues lysine 107, glycine 135, and serine 137 each contribute to the sn-glycerol 3-phosphate site. Position 139 (alanine 139) interacts with NADPH. Sn-glycerol 3-phosphate-binding residues include lysine 190, aspartate 243, serine 253, arginine 254, and asparagine 255. Catalysis depends on lysine 190, which acts as the Proton acceptor. Arginine 254 lines the NADPH pocket. NADPH-binding residues include leucine 276 and glutamate 278.

Belongs to the NAD-dependent glycerol-3-phosphate dehydrogenase family.

Its subcellular location is the cytoplasm. The catalysed reaction is sn-glycerol 3-phosphate + NAD(+) = dihydroxyacetone phosphate + NADH + H(+). It carries out the reaction sn-glycerol 3-phosphate + NADP(+) = dihydroxyacetone phosphate + NADPH + H(+). It participates in membrane lipid metabolism; glycerophospholipid metabolism. Functionally, catalyzes the reduction of the glycolytic intermediate dihydroxyacetone phosphate (DHAP) to sn-glycerol 3-phosphate (G3P), the key precursor for phospholipid synthesis. The protein is Glycerol-3-phosphate dehydrogenase [NAD(P)+] of Rhodopseudomonas palustris (strain HaA2).